Here is a 273-residue protein sequence, read N- to C-terminus: Signal recognition particle subunit SEC65 (273 aa).

Residues 25 to 71 (PSLRTPIAPKITPKVVRSQDQENPAFLPGTNNNSNSNNNSSNEKEQL) form a disordered region. Low complexity predominate over residues 55–65 (NNNSNSNNNSS).

As to quaternary structure, fungal signal recognition particle (SRP) complex consists of a 7S RNA molecule (scR1) and at least six protein subunits: SRP72, SRP68, SRP54, SEC65, SRP21 and SRP14.

The protein localises to the cytoplasm. In terms of biological role, signal-recognition-particle (SRP) assembly has a crucial role in targeting secretory proteins to the rough endoplasmic reticulum (ER) membrane. SRP is required for the cotranslational protein translocation for ER import and preferentially recognizes strongly hydrophobic signal sequences. It is involved in targeting the nascent chain-ribosome (RNC) complex to the ER and is proposed to participate in the arrest of nascent chain elongation during membrane targeting. SEC65 is required for SRP integrity. The protein is Signal recognition particle subunit SEC65 (SEC65) of Saccharomyces cerevisiae (strain ATCC 204508 / S288c) (Baker's yeast).